The primary structure comprises 193 residues: Putative manganese efflux pump MntP (193 aa).

6 helical membrane passes run 6–26 (LLGL…AVGI), 41–61 (YHFG…GTGI), 65–85 (TQSY…ANMI), 107–127 (LIIL…SLSM), 132–152 (IWYP…FGML), and 169–189 (VLGG…NGVF).

This sequence belongs to the MntP (TC 9.B.29) family.

It localises to the cell inner membrane. Probably functions as a manganese efflux pump. The polypeptide is Putative manganese efflux pump MntP (Desulfotalea psychrophila (strain LSv54 / DSM 12343)).